The primary structure comprises 341 residues: Holliday junction branch migration complex subunit RuvB (341 aa).

The segment at Met-1 to Tyr-182 is large ATPase domain (RuvB-L). ATP is bound by residues Leu-21, Arg-22, Gly-63, Lys-66, Thr-67, Thr-68, Glu-129 to Tyr-131, Arg-172, Tyr-182, and Arg-219. Residue Thr-67 participates in Mg(2+) binding. The segment at Arg-183 to Glu-253 is small ATPAse domain (RuvB-S). The head domain (RuvB-H) stretch occupies residues Pro-256 to Trp-341. DNA is bound by residues Arg-311 and Arg-316.

Belongs to the RuvB family. In terms of assembly, homohexamer. Forms an RuvA(8)-RuvB(12)-Holliday junction (HJ) complex. HJ DNA is sandwiched between 2 RuvA tetramers; dsDNA enters through RuvA and exits via RuvB. An RuvB hexamer assembles on each DNA strand where it exits the tetramer. Each RuvB hexamer is contacted by two RuvA subunits (via domain III) on 2 adjacent RuvB subunits; this complex drives branch migration. In the full resolvosome a probable DNA-RuvA(4)-RuvB(12)-RuvC(2) complex forms which resolves the HJ.

The protein resides in the cytoplasm. It carries out the reaction ATP + H2O = ADP + phosphate + H(+). The RuvA-RuvB-RuvC complex processes Holliday junction (HJ) DNA during genetic recombination and DNA repair, while the RuvA-RuvB complex plays an important role in the rescue of blocked DNA replication forks via replication fork reversal (RFR). RuvA specifically binds to HJ cruciform DNA, conferring on it an open structure. The RuvB hexamer acts as an ATP-dependent pump, pulling dsDNA into and through the RuvAB complex. RuvB forms 2 homohexamers on either side of HJ DNA bound by 1 or 2 RuvA tetramers; 4 subunits per hexamer contact DNA at a time. Coordinated motions by a converter formed by DNA-disengaged RuvB subunits stimulates ATP hydrolysis and nucleotide exchange. Immobilization of the converter enables RuvB to convert the ATP-contained energy into a lever motion, pulling 2 nucleotides of DNA out of the RuvA tetramer per ATP hydrolyzed, thus driving DNA branch migration. The RuvB motors rotate together with the DNA substrate, which together with the progressing nucleotide cycle form the mechanistic basis for DNA recombination by continuous HJ branch migration. Branch migration allows RuvC to scan DNA until it finds its consensus sequence, where it cleaves and resolves cruciform DNA. The sequence is that of Holliday junction branch migration complex subunit RuvB from Pelotomaculum thermopropionicum (strain DSM 13744 / JCM 10971 / SI).